A 284-amino-acid chain; its full sequence is Origin of replication complex subunit 6 (284 aa).

Belongs to the ORC6 family. As to quaternary structure, component of the origin recognition complex (ORC) composed of at least ORC1 (ORC1A or ORC1B), ORC2, ORC3, ORC4, ORC5 and ORC6. ORC is regulated in a cell-cycle and development dependent manner. It is sequentially assembled at the exit from anaphase of mitosis and disassembled as cells enter S phase. Interacts directly with ORC2, ORC3, ORC4 and ORC5. As to expression, follow a cell-cycle regulation with a peak at the G1/S-phase. Mostly expressed in siliques, flowers, flower buds and mature leaves, and, to a lower exent, in roots, leaves and stems.

The protein resides in the nucleus. Component of the origin recognition complex (ORC) that binds origins of replication. DNA-binding is ATP-dependent. The specific DNA sequences that define origins of replication have not been identified yet. ORC is required to assemble the pre-replication complex necessary to initiate DNA replication. In Arabidopsis thaliana (Mouse-ear cress), this protein is Origin of replication complex subunit 6.